The following is a 444-amino-acid chain: N-succinylarginine dihydrolase (444 aa).

Substrate is bound by residues 19–28 (SGLSVGNIAS), asparagine 110, and 137–138 (HR). Residue glutamate 174 is part of the active site. Position 214 (arginine 214) interacts with substrate. Histidine 250 is a catalytic residue. Residues aspartate 252 and asparagine 362 each contribute to the substrate site. The active-site Nucleophile is cysteine 368.

This sequence belongs to the succinylarginine dihydrolase family. In terms of assembly, homodimer.

The enzyme catalyses N(2)-succinyl-L-arginine + 2 H2O + 2 H(+) = N(2)-succinyl-L-ornithine + 2 NH4(+) + CO2. It participates in amino-acid degradation; L-arginine degradation via AST pathway; L-glutamate and succinate from L-arginine: step 2/5. Its function is as follows. Catalyzes the hydrolysis of N(2)-succinylarginine into N(2)-succinylornithine, ammonia and CO(2). This chain is N-succinylarginine dihydrolase, found in Aliivibrio salmonicida (strain LFI1238) (Vibrio salmonicida (strain LFI1238)).